We begin with the raw amino-acid sequence, 421 residues long: Histidine--tRNA ligase (421 aa).

The protein belongs to the class-II aminoacyl-tRNA synthetase family. As to quaternary structure, homodimer.

It is found in the cytoplasm. The catalysed reaction is tRNA(His) + L-histidine + ATP = L-histidyl-tRNA(His) + AMP + diphosphate + H(+). The sequence is that of Histidine--tRNA ligase from Fervidobacterium nodosum (strain ATCC 35602 / DSM 5306 / Rt17-B1).